We begin with the raw amino-acid sequence, 186 residues long: Folate transporter FolT (186 aa).

A run of 5 helical transmembrane segments spans residues 16-36, 47-67, 81-101, 116-136, and 153-173; these read VTLA…IPII, IVNV…SLAI, FIIW…LFFY, VTIA…PLLV, and WLKI…MPQL.

As to quaternary structure, forms a stable energy-coupling factor (ECF) transporter complex composed of a membrane-embedded substrate-binding protein (S component), two ATP-binding proteins (A components) and a transmembrane protein (T component).

Its subcellular location is the cell membrane. In terms of biological role, folate-binding protein that interacts with the energy-coupling factor (ECF) ABC-transporter complex. Unlike classic ABC transporters this ECF transporter provides the energy necessary to transport a number of different substrates. The substrates themselves are bound by transmembrane, not extracytoplasmic soluble proteins. The sequence is that of Folate transporter FolT (folT) from Streptococcus mutans serotype c (strain ATCC 700610 / UA159).